The following is a 92-amino-acid chain: DNA-directed RNA polymerase subunit Rpo11 (92 aa).

The protein belongs to the archaeal Rpo11/eukaryotic RPB11/RPC19 RNA polymerase subunit family. In terms of assembly, part of the 13-subunit RNA polymerase complex.

The protein localises to the cytoplasm. The enzyme catalyses RNA(n) + a ribonucleoside 5'-triphosphate = RNA(n+1) + diphosphate. In terms of biological role, DNA-dependent RNA polymerase (RNAP) catalyzes the transcription of DNA into RNA using the four ribonucleoside triphosphates as substrates. The sequence is that of DNA-directed RNA polymerase subunit Rpo11 from Saccharolobus solfataricus (strain ATCC 35092 / DSM 1617 / JCM 11322 / P2) (Sulfolobus solfataricus).